A 274-amino-acid chain; its full sequence is Shikimate dehydrogenase (NADP(+)) (274 aa).

Shikimate-binding positions include 15–17 and T62; that span reads SKS. The active-site Proton acceptor is the K66. D78 is an NADP(+) binding site. Shikimate is bound by residues N87 and D102. Residues 127–131 and M215 contribute to the NADP(+) site; that span reads GAGGA. A shikimate-binding site is contributed by Y217. G239 lines the NADP(+) pocket.

It belongs to the shikimate dehydrogenase family. In terms of assembly, homodimer.

It catalyses the reaction shikimate + NADP(+) = 3-dehydroshikimate + NADPH + H(+). It functions in the pathway metabolic intermediate biosynthesis; chorismate biosynthesis; chorismate from D-erythrose 4-phosphate and phosphoenolpyruvate: step 4/7. Involved in the biosynthesis of the chorismate, which leads to the biosynthesis of aromatic amino acids. Catalyzes the reversible NADPH linked reduction of 3-dehydroshikimate (DHSA) to yield shikimate (SA). This is Shikimate dehydrogenase (NADP(+)) from Dechloromonas aromatica (strain RCB).